A 207-amino-acid polypeptide reads, in one-letter code: Large ribosomal subunit protein uL4 (207 aa).

The segment covering 44-58 (RAPTRATRERSDVAR) has biased composition (basic and acidic residues). The segment at 44–82 (RAPTRATRERSDVARSGKKFGRQKGGGTARHGDRRSPIF) is disordered.

It belongs to the universal ribosomal protein uL4 family. Part of the 50S ribosomal subunit.

Its function is as follows. One of the primary rRNA binding proteins, this protein initially binds near the 5'-end of the 23S rRNA. It is important during the early stages of 50S assembly. It makes multiple contacts with different domains of the 23S rRNA in the assembled 50S subunit and ribosome. In terms of biological role, forms part of the polypeptide exit tunnel. This is Large ribosomal subunit protein uL4 from Zymomonas mobilis subsp. mobilis (strain ATCC 31821 / ZM4 / CP4).